Reading from the N-terminus, the 621-residue chain is tRNA uridine 5-carboxymethylaminomethyl modification enzyme MnmG (621 aa).

8–13 (GAGHAG) is a binding site for FAD. 269-283 (GPRYCPSIEDKIHRF) provides a ligand contact to NAD(+).

Belongs to the MnmG family. As to quaternary structure, homodimer. Heterotetramer of two MnmE and two MnmG subunits. Requires FAD as cofactor.

The protein resides in the cytoplasm. In terms of biological role, NAD-binding protein involved in the addition of a carboxymethylaminomethyl (cmnm) group at the wobble position (U34) of certain tRNAs, forming tRNA-cmnm(5)s(2)U34. The sequence is that of tRNA uridine 5-carboxymethylaminomethyl modification enzyme MnmG from Chlorobium phaeovibrioides (strain DSM 265 / 1930) (Prosthecochloris vibrioformis (strain DSM 265)).